Here is an 80-residue protein sequence, read N- to C-terminus: MRLIKLEQPNCNPCKMVSNYLEQVNIQFETVDVTQEPEVAARFGVMGVPVTILLSDQGEEVNRSVGFKPNELDELLKELR.

In terms of domain architecture, Thioredoxin spans 1–80 (MRLIKLEQPN…ELDELLKELR (80 aa)). A disulfide bridge links Cys11 with Cys14.

The protein belongs to the thioredoxin family.

The sequence is that of SPbeta prophage-derived thioredoxin-like protein YosR (yosR) from Bacillus subtilis (strain 168).